The sequence spans 193 residues: Imidazoleglycerol-phosphate dehydratase (193 aa).

Belongs to the imidazoleglycerol-phosphate dehydratase family.

It is found in the cytoplasm. The catalysed reaction is D-erythro-1-(imidazol-4-yl)glycerol 3-phosphate = 3-(imidazol-4-yl)-2-oxopropyl phosphate + H2O. Its pathway is amino-acid biosynthesis; L-histidine biosynthesis; L-histidine from 5-phospho-alpha-D-ribose 1-diphosphate: step 6/9. The polypeptide is Imidazoleglycerol-phosphate dehydratase (Staphylococcus carnosus (strain TM300)).